Consider the following 133-residue polypeptide: Transcription antitermination protein NusB (133 aa).

The protein belongs to the NusB family.

In terms of biological role, involved in transcription antitermination. Required for transcription of ribosomal RNA (rRNA) genes. Binds specifically to the boxA antiterminator sequence of the ribosomal RNA (rrn) operons. The sequence is that of Transcription antitermination protein NusB from Shewanella denitrificans (strain OS217 / ATCC BAA-1090 / DSM 15013).